The primary structure comprises 79 residues: D-alanyl carrier protein (79 aa).

The Carrier domain occupies 1-77 (MDVKETILNI…KIISGVVELM (77 aa)). Ser-35 bears the O-(pantetheine 4'-phosphoryl)serine mark.

This sequence belongs to the DltC family. Post-translationally, 4'-phosphopantetheine is transferred from CoA to a specific serine of apo-DCP.

It localises to the cytoplasm. It participates in cell wall biogenesis; lipoteichoic acid biosynthesis. Its function is as follows. Carrier protein involved in the D-alanylation of lipoteichoic acid (LTA). The loading of thioester-linked D-alanine onto DltC is catalyzed by D-alanine--D-alanyl carrier protein ligase DltA. The DltC-carried D-alanyl group is further transferred to cell membrane phosphatidylglycerol (PG) by forming an ester bond, probably catalyzed by DltD. D-alanylation of LTA plays an important role in modulating the properties of the cell wall in Gram-positive bacteria, influencing the net charge of the cell wall. The protein is D-alanyl carrier protein of Streptococcus suis (strain 98HAH33).